Consider the following 702-residue polypeptide: Phosphoglycerol transferase I (702 aa).

3 helical membrane-spanning segments follow: residues 3-25 (WILALSLLLLLLLLVASPRLAWL), 73-95 (GYIAVFIGMVLLSLSPLVLLRVR), and 102-124 (GGGAVFGAFVVMLLVSVAVSPLY).

The protein belongs to the OpgB family.

It localises to the cell inner membrane. It catalyses the reaction a phosphatidylglycerol + a membrane-derived-oligosaccharide D-glucose = a 1,2-diacyl-sn-glycerol + a membrane-derived-oligosaccharide 6-(glycerophospho)-D-glucose.. Its pathway is glycan metabolism; osmoregulated periplasmic glucan (OPG) biosynthesis. Functionally, transfers a phosphoglycerol residue from phosphatidylglycerol to the membrane-bound nascent glucan backbones. The chain is Phosphoglycerol transferase I from Xanthomonas campestris pv. campestris (strain ATCC 33913 / DSM 3586 / NCPPB 528 / LMG 568 / P 25).